Reading from the N-terminus, the 290-residue chain is 4-hydroxybenzoate octaprenyltransferase (290 aa).

8 consecutive transmembrane segments (helical) span residues 23–43 (IGAL…TPGV), 46–66 (LWIL…GCVV), 99–119 (LFVV…TMTI), 141–161 (LPQV…FAAV), 163–183 (ESVP…AVAY), 213–233 (LIIG…GELN), 234–254 (GLGW…VYQQ), and 268–288 (AFMN…MSYW).

This sequence belongs to the UbiA prenyltransferase family. It depends on Mg(2+) as a cofactor.

The protein resides in the cell inner membrane. The catalysed reaction is all-trans-octaprenyl diphosphate + 4-hydroxybenzoate = 4-hydroxy-3-(all-trans-octaprenyl)benzoate + diphosphate. It participates in cofactor biosynthesis; ubiquinone biosynthesis. Functionally, catalyzes the prenylation of para-hydroxybenzoate (PHB) with an all-trans polyprenyl group. Mediates the second step in the final reaction sequence of ubiquinone-8 (UQ-8) biosynthesis, which is the condensation of the polyisoprenoid side chain with PHB, generating the first membrane-bound Q intermediate 3-octaprenyl-4-hydroxybenzoate. This Escherichia coli (strain SE11) protein is 4-hydroxybenzoate octaprenyltransferase.